The following is a 1357-amino-acid chain: DNA-directed RNA polymerase subunit beta (1357 aa).

Belongs to the RNA polymerase beta chain family. In terms of assembly, the RNAP catalytic core consists of 2 alpha, 1 beta, 1 beta' and 1 omega subunit. When a sigma factor is associated with the core the holoenzyme is formed, which can initiate transcription.

It carries out the reaction RNA(n) + a ribonucleoside 5'-triphosphate = RNA(n+1) + diphosphate. Its function is as follows. DNA-dependent RNA polymerase catalyzes the transcription of DNA into RNA using the four ribonucleoside triphosphates as substrates. The sequence is that of DNA-directed RNA polymerase subunit beta from Pseudomonas fluorescens (strain Pf0-1).